The following is a 180-amino-acid chain: MTQISGSPDVPDLGRRQFMNLLTFGTITGVAAGALYPAVKYLIPPSSGGSGGGVTAKDALGNDVKVTEFLASHNAGDRVLAQGLKGDPTYIVVQGDDTIANYGINAVCTHLGCVVPWNASENKFMCPCHGSQYNAEGKVVRGPAPLSLALAHATVTDDDKLVLSTWTETDFRTDEDPWWA.

The helical transmembrane segment at 21–43 threads the bilayer; sequence LLTFGTITGVAAGALYPAVKYLI. Residues 66–162 enclose the Rieske domain; it reads VTEFLASHNA…ATVTDDDKLV (97 aa). Residues Cys108, His110, Cys126, and His129 each contribute to the [2Fe-2S] cluster site. A disulfide bridge connects residues Cys113 and Cys128.

It belongs to the Rieske iron-sulfur protein family. As to quaternary structure, the 4 large subunits of the cytochrome b6-f complex are cytochrome b6, subunit IV (17 kDa polypeptide, PetD), cytochrome f and the Rieske protein, while the 4 small subunits are PetG, PetL, PetM and PetN. The complex functions as a dimer. [2Fe-2S] cluster serves as cofactor.

It localises to the cellular thylakoid membrane. It catalyses the reaction 2 oxidized [plastocyanin] + a plastoquinol + 2 H(+)(in) = 2 reduced [plastocyanin] + a plastoquinone + 4 H(+)(out). In terms of biological role, component of the cytochrome b6-f complex, which mediates electron transfer between photosystem II (PSII) and photosystem I (PSI), cyclic electron flow around PSI, and state transitions. The sequence is that of Cytochrome b6-f complex iron-sulfur subunit 2 from Synechocystis sp. (strain ATCC 27184 / PCC 6803 / Kazusa).